We begin with the raw amino-acid sequence, 116 residues long: Proline-rich protein 9 (116 aa).

In Bos taurus (Bovine), this protein is Proline-rich protein 9 (PRR9).